The chain runs to 295 residues: Shikimate dehydrogenase (NADP(+)) (295 aa).

Shikimate-binding positions include 18 to 20 (SRS) and threonine 66. Lysine 70 functions as the Proton acceptor in the catalytic mechanism. Asparagine 91 and aspartate 106 together coordinate shikimate. Residues 130 to 134 (GNGGA) and methionine 235 contribute to the NADP(+) site. Tyrosine 237 is a shikimate binding site. Glycine 258 is an NADP(+) binding site.

This sequence belongs to the shikimate dehydrogenase family. As to quaternary structure, homodimer.

The catalysed reaction is shikimate + NADP(+) = 3-dehydroshikimate + NADPH + H(+). The protein operates within metabolic intermediate biosynthesis; chorismate biosynthesis; chorismate from D-erythrose 4-phosphate and phosphoenolpyruvate: step 4/7. Its function is as follows. Involved in the biosynthesis of the chorismate, which leads to the biosynthesis of aromatic amino acids. Catalyzes the reversible NADPH linked reduction of 3-dehydroshikimate (DHSA) to yield shikimate (SA). The chain is Shikimate dehydrogenase (NADP(+)) from Chlorobium phaeobacteroides (strain DSM 266 / SMG 266 / 2430).